We begin with the raw amino-acid sequence, 223 residues long: uncharacterized protein (223 aa).

The region spanning 5-116 is the Response regulatory domain; that stretch reads RILIVEDDVM…ELLLRMRNML (112 aa). 4-aspartylphosphate is present on aspartate 52. Residues 121 to 219 constitute a DNA-binding region (ompR/PhoB-type); that stretch reads GTFTQIKHLY…IYGEGYRLNT (99 aa).

Phosphorylated by YbdK.

Its subcellular location is the cytoplasm. Member of the two-component regulatory system YbdK/YbdJ. This is an uncharacterized protein from Bacillus subtilis (strain 168).